The following is a 345-amino-acid chain: Platelet-derived growth factor C (345 aa).

A signal peptide spans 1–22 (MSLFGLLLLTSALAGQRQGTQA). 2 N-linked (GlcNAc...) asparagine glycosylation sites follow: Asn-25 and Asn-55. Residues 46–163 (HERIITVSTN…PGFCIHYNIV (118 aa)) form the CUB domain. Intrachain disulfides connect Cys-104-Cys-124, Cys-250-Cys-294, Cys-280-Cys-335, and Cys-287-Cys-337.

It belongs to the PDGF/VEGF growth factor family. In terms of assembly, homodimer; disulfide-linked. Interacts with PDGFRA homodimers, and with heterodimers formed by PDGFRA and PDGFRB. Interacts (via CUB domain) with PLAT (via kringle domain). Post-translationally, proteolytic removal of the N-terminal CUB domain releasing the core domain is necessary for unmasking the receptor-binding epitopes of the core domain. Cleavage after basic residues in the hinge region (region connecting the CUB and growth factor domains) gives rise to the receptor-binding form. Cleaved by PLAT and PLG. In terms of processing, sumoylated with SUMO1. N-glycosylated. As to expression, expressed in the fallopian tube, vascular smooth muscle cells in kidney, breast and colon and in visceral smooth muscle of the gastrointestinal tract. Highly expressed in retinal pigment epithelia. Expressed in medulloblastoma. In the kidney, constitutively expressed in parietal epithelial cells of Bowman's capsule, tubular epithelial cells and in arterial endothelial cells (at protein level). Highly expressed in the platelets, prostate, testis and uterus. Higher expression is observed in uterine leiomyomata. Weaker expression in the spleen, thymus, heart, pancreas, liver, ovary cells and small intestine, and negligible expression in the colon and peripheral blood leukocytes.

Its subcellular location is the cytoplasm. It is found in the cytosol. The protein localises to the secreted. It localises to the nucleus. The protein resides in the cytoplasmic granule. Its subcellular location is the cell membrane. Functionally, growth factor that plays an essential role in the regulation of embryonic development, cell proliferation, cell migration, survival and chemotaxis. Potent mitogen and chemoattractant for cells of mesenchymal origin. Required for normal skeleton formation during embryonic development, especially for normal development of the craniofacial skeleton and for normal development of the palate. Required for normal skin morphogenesis during embryonic development. Plays an important role in wound healing, where it appears to be involved in three stages: inflammation, proliferation and remodeling. Plays an important role in angiogenesis and blood vessel development. Involved in fibrotic processes, in which transformation of interstitial fibroblasts into myofibroblasts plus collagen deposition occurs. The CUB domain has mitogenic activity in coronary artery smooth muscle cells, suggesting a role beyond the maintenance of the latency of the PDGF domain. In the nucleus, PDGFC seems to have additional function. The polypeptide is Platelet-derived growth factor C (PDGFC) (Homo sapiens (Human)).